The primary structure comprises 457 residues: Allantoinase (457 aa).

Residues H58, H60, K145, H181, H237, and D310 each coordinate Zn(2+). K145 carries the post-translational modification N6-carboxylysine.

It belongs to the metallo-dependent hydrolases superfamily. Allantoinase family. In terms of assembly, homotetramer. Zn(2+) is required as a cofactor. Carboxylation allows a single lysine to coordinate two zinc ions.

It carries out the reaction (S)-allantoin + H2O = allantoate + H(+). The protein operates within nitrogen metabolism; (S)-allantoin degradation; allantoate from (S)-allantoin: step 1/1. Functionally, catalyzes the conversion of allantoin (5-ureidohydantoin) to allantoic acid by hydrolytic cleavage of the five-member hydantoin ring. The sequence is that of Allantoinase from Solibacter usitatus (strain Ellin6076).